The sequence spans 318 residues: Peptidyl-prolyl cis-trans isomerase CPR4 (318 aa).

An N-terminal signal peptide occupies residues 1–20; the sequence is MWLKSLLLCLYSLVLCQVHA. A PPIase cyclophilin-type domain is found at 55-225; it reads YFDPVSKSMK…HELRFLYFVL (171 aa). The N-linked (GlcNAc...) asparagine glycan is linked to asparagine 166. The helical transmembrane segment at 286–303 threads the bilayer; it reads ISRALMCLTVLGLCFIAY.

It is found in the membrane. It catalyses the reaction [protein]-peptidylproline (omega=180) = [protein]-peptidylproline (omega=0). Functionally, PPIases accelerate the folding of proteins. It catalyzes the cis-trans isomerization of proline imidic peptide bonds in oligopeptides. In Saccharomyces cerevisiae (strain ATCC 204508 / S288c) (Baker's yeast), this protein is Peptidyl-prolyl cis-trans isomerase CPR4 (CPR4).